The sequence spans 383 residues: ATP phosphoribosyltransferase regulatory subunit (383 aa).

Belongs to the class-II aminoacyl-tRNA synthetase family. HisZ subfamily. In terms of assembly, heteromultimer composed of HisG and HisZ subunits.

The protein localises to the cytoplasm. It participates in amino-acid biosynthesis; L-histidine biosynthesis; L-histidine from 5-phospho-alpha-D-ribose 1-diphosphate: step 1/9. Its function is as follows. Required for the first step of histidine biosynthesis. May allow the feedback regulation of ATP phosphoribosyltransferase activity by histidine. The sequence is that of ATP phosphoribosyltransferase regulatory subunit from Cupriavidus necator (strain ATCC 17699 / DSM 428 / KCTC 22496 / NCIMB 10442 / H16 / Stanier 337) (Ralstonia eutropha).